The sequence spans 494 residues: Trigger factor (494 aa).

The 86-residue stretch at 169-254 (GDRITMDYVG…VKEVAAPADV (86 aa)) folds into the PPIase FKBP-type domain. Positions 441–494 (LAEEEGEAKAETKKAAPKKKAAAKAEAADAGEGEEAAPKKKAAPKKKAADESAE) are disordered.

It belongs to the FKBP-type PPIase family. Tig subfamily.

The protein resides in the cytoplasm. It catalyses the reaction [protein]-peptidylproline (omega=180) = [protein]-peptidylproline (omega=0). Functionally, involved in protein export. Acts as a chaperone by maintaining the newly synthesized protein in an open conformation. Functions as a peptidyl-prolyl cis-trans isomerase. The protein is Trigger factor of Rhizobium johnstonii (strain DSM 114642 / LMG 32736 / 3841) (Rhizobium leguminosarum bv. viciae).